The chain runs to 207 residues: ATP-dependent Clp protease proteolytic subunit (207 aa).

The active-site Nucleophile is the Ser111. Residue His136 is part of the active site.

This sequence belongs to the peptidase S14 family. In terms of assembly, fourteen ClpP subunits assemble into 2 heptameric rings which stack back to back to give a disk-like structure with a central cavity, resembling the structure of eukaryotic proteasomes. Component of the ClpAP and ClpXP complexes.

Its subcellular location is the cytoplasm. The enzyme catalyses Hydrolysis of proteins to small peptides in the presence of ATP and magnesium. alpha-casein is the usual test substrate. In the absence of ATP, only oligopeptides shorter than five residues are hydrolyzed (such as succinyl-Leu-Tyr-|-NHMec, and Leu-Tyr-Leu-|-Tyr-Trp, in which cleavage of the -Tyr-|-Leu- and -Tyr-|-Trp bonds also occurs).. In terms of biological role, cleaves peptides in various proteins in a process that requires ATP hydrolysis. Has a chymotrypsin-like activity. Plays a major role in the degradation of misfolded proteins. In Escherichia coli O139:H28 (strain E24377A / ETEC), this protein is ATP-dependent Clp protease proteolytic subunit.